Here is a 143-residue protein sequence, read N- to C-terminus: Ribonuclease P protein component 2 (143 aa).

This sequence belongs to the eukaryotic/archaeal RNase P protein component 2 family. Consists of a catalytic RNA component and at least 4-5 protein subunits.

It localises to the cytoplasm. It carries out the reaction Endonucleolytic cleavage of RNA, removing 5'-extranucleotides from tRNA precursor.. In terms of biological role, part of ribonuclease P, a protein complex that generates mature tRNA molecules by cleaving their 5'-ends. This Saccharolobus islandicus (strain Y.N.15.51 / Yellowstone #2) (Sulfolobus islandicus) protein is Ribonuclease P protein component 2.